We begin with the raw amino-acid sequence, 366 residues long: UDP-N-acetylglucosamine--N-acetylmuramyl-(pentapeptide) pyrophosphoryl-undecaprenol N-acetylglucosamine transferase (366 aa).

Residues 10-12 (TGG), Asn124, Arg165, Ser195, Ile250, and Gln295 each bind UDP-N-acetyl-alpha-D-glucosamine.

This sequence belongs to the glycosyltransferase 28 family. MurG subfamily.

The protein localises to the cell inner membrane. It carries out the reaction di-trans,octa-cis-undecaprenyl diphospho-N-acetyl-alpha-D-muramoyl-L-alanyl-D-glutamyl-meso-2,6-diaminopimeloyl-D-alanyl-D-alanine + UDP-N-acetyl-alpha-D-glucosamine = di-trans,octa-cis-undecaprenyl diphospho-[N-acetyl-alpha-D-glucosaminyl-(1-&gt;4)]-N-acetyl-alpha-D-muramoyl-L-alanyl-D-glutamyl-meso-2,6-diaminopimeloyl-D-alanyl-D-alanine + UDP + H(+). The protein operates within cell wall biogenesis; peptidoglycan biosynthesis. Cell wall formation. Catalyzes the transfer of a GlcNAc subunit on undecaprenyl-pyrophosphoryl-MurNAc-pentapeptide (lipid intermediate I) to form undecaprenyl-pyrophosphoryl-MurNAc-(pentapeptide)GlcNAc (lipid intermediate II). This is UDP-N-acetylglucosamine--N-acetylmuramyl-(pentapeptide) pyrophosphoryl-undecaprenol N-acetylglucosamine transferase from Thermodesulfovibrio yellowstonii (strain ATCC 51303 / DSM 11347 / YP87).